Consider the following 137-residue polypeptide: Putative pre-16S rRNA nuclease (137 aa).

Belongs to the YqgF nuclease family.

The protein resides in the cytoplasm. Its function is as follows. Could be a nuclease involved in processing of the 5'-end of pre-16S rRNA. This Clostridium botulinum (strain Alaska E43 / Type E3) protein is Putative pre-16S rRNA nuclease.